The chain runs to 195 residues: Imidazoleglycerol-phosphate dehydratase (195 aa).

Belongs to the imidazoleglycerol-phosphate dehydratase family.

It localises to the cytoplasm. It carries out the reaction D-erythro-1-(imidazol-4-yl)glycerol 3-phosphate = 3-(imidazol-4-yl)-2-oxopropyl phosphate + H2O. The protein operates within amino-acid biosynthesis; L-histidine biosynthesis; L-histidine from 5-phospho-alpha-D-ribose 1-diphosphate: step 6/9. The protein is Imidazoleglycerol-phosphate dehydratase of Parafrankia sp. (strain EAN1pec).